We begin with the raw amino-acid sequence, 307 residues long: MKSQWHGTCDLRLFKSSSSNNKDIVKTIHQAKSTAPLKVMRVFNDKKDGRCEIPILHSAGGIVGGDQLTINVNAEEDSIAICSSVAAQKVYGSRGRSKLNPQGSWANQKCFFQIKQNSDFEWMPQELIVYQGGLFEQNMTVNLDPSSSFLCVDLVRLGRTAAEEQLGSGVWRSSLEIFRDNNQGKHYEFSDRLELSGEALKSIHGLEQKPVFGSLTWITPKKIMQKDLSDLLVECRQQRAGLEGFMTCSLLENGISARYTGSSTQSARFWFYRIWSLTRVLRKLSMPEYMRIWPMQENPSRDIKCPL.

It belongs to the UreD family. In terms of assembly, ureD, UreF and UreG form a complex that acts as a GTP-hydrolysis-dependent molecular chaperone, activating the urease apoprotein by helping to assemble the nickel containing metallocenter of UreC. The UreE protein probably delivers the nickel.

The protein resides in the cytoplasm. Required for maturation of urease via the functional incorporation of the urease nickel metallocenter. This chain is Urease accessory protein UreD, found in Prochlorococcus marinus (strain NATL2A).